Consider the following 164-residue polypeptide: Phosphopantetheine adenylyltransferase (164 aa).

Ser-9 contacts substrate. Residues 9–10 (SF) and His-17 each bind ATP. Positions 41, 78, and 92 each coordinate substrate. Residues 93–95 (GLR), Glu-103, and 128–134 (SRPITAT) each bind ATP.

This sequence belongs to the bacterial CoaD family. Homohexamer. Mg(2+) serves as cofactor.

Its subcellular location is the cytoplasm. The enzyme catalyses (R)-4'-phosphopantetheine + ATP + H(+) = 3'-dephospho-CoA + diphosphate. It participates in cofactor biosynthesis; coenzyme A biosynthesis; CoA from (R)-pantothenate: step 4/5. Functionally, reversibly transfers an adenylyl group from ATP to 4'-phosphopantetheine, yielding dephospho-CoA (dPCoA) and pyrophosphate. The protein is Phosphopantetheine adenylyltransferase of Rhizobium leguminosarum bv. trifolii (strain WSM2304).